Consider the following 394-residue polypeptide: Elongation factor Tu (394 aa).

In terms of domain architecture, tr-type G spans 10-204 (KPHVNIGTIG…AVDSYIPQPV (195 aa)). A G1 region spans residues 19–26 (GHVDHGKT). Residue 19–26 (GHVDHGKT) participates in GTP binding. Mg(2+) is bound at residue Thr26. Residues 60–64 (GITIS) form a G2 region. Residues 81–84 (DCPG) form a G3 region. GTP is bound by residues 81–85 (DCPGH) and 136–139 (NKVD). A G4 region spans residues 136–139 (NKVD). Positions 174–176 (SAL) are G5.

The protein belongs to the TRAFAC class translation factor GTPase superfamily. Classic translation factor GTPase family. EF-Tu/EF-1A subfamily. Monomer.

Its subcellular location is the cytoplasm. It catalyses the reaction GTP + H2O = GDP + phosphate + H(+). Functionally, GTP hydrolase that promotes the GTP-dependent binding of aminoacyl-tRNA to the A-site of ribosomes during protein biosynthesis. This Rickettsia felis (strain ATCC VR-1525 / URRWXCal2) (Rickettsia azadi) protein is Elongation factor Tu.